The chain runs to 429 residues: Protein ABERRANT PANICLE ORGANIZATION 1 (429 aa).

The span at 1 to 11 shows a compositional bias: pro residues; it reads MMNPRRLPPLP. Residues 1 to 21 form a disordered region; sequence MMNPRRLPPLPSSTSSASAAD. An F-box domain is found at 25 to 71; that stretch reads PRVWRRLPQPLVDRVLACLPTPSFLRLRAACRRFYHLLFSSPFLHSH. Helical transmembrane passes span 72-92 and 112-132; these read LLLS…GHLL and VAGG…LAFL. Kelch repeat units lie at residues 229-277, 284-339, and 350-397; these read MAFA…ELGG, RVAL…AEGG, and YVVL…GAAG.

Part of a putative SCF (ASK/Cullin/F-box) ubiquitin ligase complex. Interacts with FL/APO2. As to expression, expressed in seedlings, roots, leaves, shoot apical meristem (SAM), developing panicles, and, at lower levels, in developing seeds.

The protein localises to the membrane. It participates in protein modification; protein ubiquitination. Its function is as follows. Component of SCF(ASK-cullin-F-box) E3 ubiquitin ligase complexes, which may mediate the ubiquitination and subsequent proteasomal degradation of target proteins. Together with FL/APO2, involved in the temporal regulation of meristem identity during both vegetative and reproductive developments in an APO2-dependent manner. Promotes spikelet formation by suppressing the precocious conversion of inflorescence meristems to spikelet meristems, probably via a positive regulation of class-C floral homeotic genes, but not of class-B genes, and through the control of cell proliferation in meristems. Mediates culm development and strength/diameter enhancement at internodes. Required for the regulation of the plastochron, floral organ identity, and floral determinacy. Controls the number of primary rachis branches (PRBs). May trigger the formation of vascular bundle systems which, consequently, promote carbohydrate translocation to panicles. Involved in ozone-induced grain yield regulation. The sequence is that of Protein ABERRANT PANICLE ORGANIZATION 1 from Oryza sativa subsp. indica (Rice).